The primary structure comprises 100 residues: Urease subunit gamma (100 aa).

The protein belongs to the urease gamma subunit family. As to quaternary structure, heterotrimer of UreA (gamma), UreB (beta) and UreC (alpha) subunits. Three heterotrimers associate to form the active enzyme.

The protein resides in the cytoplasm. It catalyses the reaction urea + 2 H2O + H(+) = hydrogencarbonate + 2 NH4(+). It functions in the pathway nitrogen metabolism; urea degradation; CO(2) and NH(3) from urea (urease route): step 1/1. The sequence is that of Urease subunit gamma from Burkholderia mallei (strain NCTC 10247).